A 934-amino-acid polypeptide reads, in one-letter code: uncharacterized protein (934 aa).

The N-terminal stretch at 1 to 24 is a signal peptide; that stretch reads MKLKKRYLLLGSTLTVSAALILSA. C25 carries N-palmitoyl cysteine lipidation. C25 carries S-diacylglycerol cysteine lipidation. The segment at 111-131 is disordered; it reads SGLKGRAQKNGSTDSSDGSSK. The span at 119 to 131 shows a compositional bias: polar residues; the sequence is KNGSTDSSDGSSK.

It is found in the cell membrane. This is an uncharacterized protein from Mycoplasma genitalium (strain ATCC 33530 / DSM 19775 / NCTC 10195 / G37) (Mycoplasmoides genitalium).